The sequence spans 116 residues: Iron-sulfur cluster insertion protein ErpA (116 aa).

The iron-sulfur cluster site is built by Cys44, Cys108, and Cys110.

This sequence belongs to the HesB/IscA family. As to quaternary structure, homodimer. The cofactor is iron-sulfur cluster.

Its function is as follows. Required for insertion of 4Fe-4S clusters for at least IspG. This is Iron-sulfur cluster insertion protein ErpA from Shewanella piezotolerans (strain WP3 / JCM 13877).